A 141-amino-acid polypeptide reads, in one-letter code: Hemoglobin subunit alpha-D (141 aa).

Residues 1 to 141 (MLNAEDKKLI…VSAVLAEKYR (141 aa)) enclose the Globin domain. Heme b is bound by residues histidine 58 and histidine 87.

The protein belongs to the globin family. In terms of assembly, heterotetramer of two alpha-D chains and two beta chains. Red blood cells.

In terms of biological role, involved in oxygen transport from the lung to the various peripheral tissues. The chain is Hemoglobin subunit alpha-D (HBAD) from Phasianus colchicus colchicus (Black-necked pheasant).